The primary structure comprises 153 residues: Ribosome maturation factor RimP (153 aa).

Belongs to the RimP family.

The protein localises to the cytoplasm. Its function is as follows. Required for maturation of 30S ribosomal subunits. This chain is Ribosome maturation factor RimP, found in Clostridium botulinum (strain Kyoto / Type A2).